We begin with the raw amino-acid sequence, 51 residues long: Insulin (51 aa).

Disulfide bonds link Cys-7–Cys-37, Cys-19–Cys-50, and Cys-36–Cys-41.

Belongs to the insulin family. As to quaternary structure, heterodimer of a B chain and an A chain linked by two disulfide bonds.

The protein resides in the secreted. In terms of biological role, insulin decreases blood glucose concentration. It increases cell permeability to monosaccharides, amino acids and fatty acids. It accelerates glycolysis, the pentose phosphate cycle, and glycogen synthesis in liver. This Hystrix cristata (North African crested porcupine) protein is Insulin (INS).